The sequence spans 276 residues: Protease HtpX homolog (276 aa).

A helical membrane pass occupies residues 14–34 (IVLFALIGQALGGTGGMLLAF). Position 130 (His-130) interacts with Zn(2+). Glu-131 is a catalytic residue. Zn(2+) is bound at residue His-134. The next 2 helical transmembrane spans lie at 145 to 165 (VAAT…FFGG) and 171 to 191 (LVSL…QSAI). Position 196 (Glu-196) interacts with Zn(2+).

Belongs to the peptidase M48B family. Zn(2+) serves as cofactor.

It localises to the cell inner membrane. This is Protease HtpX homolog from Salinibacter ruber (strain DSM 13855 / M31).